The following is a 306-amino-acid chain: Armadillo repeat-containing protein 10 (306 aa).

A helical membrane pass occupies residues 7 to 29; it reads VGWVAAGLVLGAGACYCIYRLTR. Serine 43 is subject to Phosphoserine. Residue threonine 48 is modified to Phosphothreonine. The ARM repeat unit spans residues 101 to 143; sequence GGIPIVGSKINSLNQSIKEKALNALNNLSVNVENQTKIKIYVR.

As to quaternary structure, interacts with the DNA-binding domain of p53/TP53.

It localises to the endoplasmic reticulum membrane. Its subcellular location is the mitochondrion outer membrane. Its function is as follows. May play a role in cell survival and cell growth. May suppress the transcriptional activity of p53/TP53. This Rattus norvegicus (Rat) protein is Armadillo repeat-containing protein 10 (Armc10).